Reading from the N-terminus, the 767-residue chain is E3 ubiquitin-protein ligase pub1 (767 aa).

The region spanning 1 to 111 (MSNSAQSRRI…AIGGDEMLTR (111 aa)) is the C2 domain. A compositionally biased stretch (polar residues) spans 138-158 (LQVPSSAASGARTQRTSITND). 2 disordered regions span residues 138-216 (LQVP…RRTD) and 252-306 (SASS…RPYF). Residue T156 is modified to Phosphothreonine. Low complexity predominate over residues 159 to 176 (PQSSQSSSVSRNPASSRA). S178 carries the post-translational modification Phosphoserine. Phosphothreonine is present on T180. The segment covering 184–194 (APAASPASSEP) has biased composition (low complexity). One can recognise a WW 1 domain in the interval 211 to 236 (WERRTDNLGRTYYVDHNTRSTTWIRP). The span at 257 to 286 (NVTEGVQPSSSNAARRTEASVLTSNATTAG) shows a compositional bias: polar residues. 2 WW domains span residues 294 to 319 (WEQR…WVDP) and 351 to 376 (WEMR…WDDP). Residues 463 to 767 (FLLSHEMFNP…VEETIGFGQE (305 aa)) form the HECT domain. Catalysis depends on C735, which acts as the Glycyl thioester intermediate.

It is found in the membrane. The protein resides in the cytoplasm. It catalyses the reaction S-ubiquitinyl-[E2 ubiquitin-conjugating enzyme]-L-cysteine + [acceptor protein]-L-lysine = [E2 ubiquitin-conjugating enzyme]-L-cysteine + N(6)-ubiquitinyl-[acceptor protein]-L-lysine.. Its pathway is protein modification; protein ubiquitination. In terms of biological role, E3 ubiquitin-protein ligase which accepts ubiquitin from an E2 ubiquitin-conjugating enzyme in the form of a thioester and then directly transfers the ubiquitin to targeted substrates. Regulates ubiquitination of cdc25. The sequence is that of E3 ubiquitin-protein ligase pub1 (pub1) from Schizosaccharomyces pombe (strain 972 / ATCC 24843) (Fission yeast).